A 188-amino-acid polypeptide reads, in one-letter code: Probable nicotinate-nucleotide adenylyltransferase (188 aa).

This sequence belongs to the NadD family.

The catalysed reaction is nicotinate beta-D-ribonucleotide + ATP + H(+) = deamido-NAD(+) + diphosphate. It participates in cofactor biosynthesis; NAD(+) biosynthesis; deamido-NAD(+) from nicotinate D-ribonucleotide: step 1/1. Its function is as follows. Catalyzes the reversible adenylation of nicotinate mononucleotide (NaMN) to nicotinic acid adenine dinucleotide (NaAD). The chain is Probable nicotinate-nucleotide adenylyltransferase from Listeria innocua serovar 6a (strain ATCC BAA-680 / CLIP 11262).